A 336-amino-acid polypeptide reads, in one-letter code: Vomeronasal type-1 receptor 102 (336 aa).

Residues 1 to 42 lie on the Extracellular side of the membrane; sequence MVGVQICQGMTSEILFFSLQPQFSNMMNKNSRLHIDSNIRNT. A helical membrane pass occupies residues 43–63; that stretch reads FFTEIGIGVSANSLLLLFNIF. Topologically, residues 64–75 are cytoplasmic; the sequence is KFIHGQRSRLTD. Residues 76-96 traverse the membrane as a helical segment; the sequence is LPIGLLSLINLLMLLIMACIA. The Extracellular segment spans residues 97 to 120; the sequence is TDIFISCRRWDDIICKSLLYLYRT. An intrachain disulfide couples Cys111 to Cys198. A helical transmembrane segment spans residues 121 to 140; the sequence is FRGLSLSTTCLLSVLQAIIL. Over 141–157 the chain is Cytoplasmic; that stretch reads SPRSSCLAKYKHKPPHH. Residues 158–178 form a helical membrane-spanning segment; it reads IFCAMLFLSVLYMFISSHLLL. At 179 to 213 the chain is on the extracellular side; that stretch reads SIIATPNLTTNDFIHVSQSCSILPMSYLMQSMFST. Asn185 carries an N-linked (GlcNAc...) asparagine glycan. The chain crosses the membrane as a helical span at residues 214–234; it reads LLAIRNVFLISLIVLSTWYMV. The Cytoplasmic portion of the chain corresponds to 235-264; the sequence is ALLCRHRKQTRHLQDTSLSRKASPEQRATR. Residues 265–285 form a helical membrane-spanning segment; sequence SILMLRSLFVLMSIFDSIVSC. Residues 286-296 lie on the Extracellular side of the membrane; the sequence is SRTMYLNDPTS. Residues 297 to 317 traverse the membrane as a helical segment; the sequence is YSIQLLVVHIYATVSPFVFMI. Residues 318–336 lie on the Cytoplasmic side of the membrane; that stretch reads TEKHIVNYLKSMYVRVLNV.

This sequence belongs to the G-protein coupled receptor 1 family. As to expression, expressed in 1-4% of neurons of the vomeronasal organ. Only one pheromone receptor gene may be expressed in a particular neuron. Not expressed in the main olfactory epithelium.

The protein localises to the cell membrane. Its function is as follows. Putative pheromone receptor implicated in the regulation of social as well as reproductive behavior. In Rattus norvegicus (Rat), this protein is Vomeronasal type-1 receptor 102 (Vom1r102).